The sequence spans 606 residues: Melanoma-associated antigen D2 (606 aa).

Disordered regions lie at residues 1–29 and 52–204; these read MSDTSESGAGLTRFQAEASEKDSSSMMQT and SEDV…GGRR. N-acetylserine is present on serine 2. Serine 5 carries the phosphoserine modification. Position 72 is a phosphothreonine (threonine 72). A compositionally biased stretch (polar residues) spans 79–100; it reads PATQASSTTQLTDTQVLATENK. Basic and acidic residues predominate over residues 122–131; the sequence is ETKKVSHVAD. Low complexity predominate over residues 142–164; the sequence is EAAPSQASADEPEPESAAAQSQE. Serine 157 carries the phosphoserine modification. The segment covering 171-181 has biased composition (basic residues); that stretch reads KVKAKKARKVK. Residues serine 190, serine 191, serine 194, serine 197, serine 244, and serine 247 each carry the phosphoserine modification. Residues 248–260 show a composition bias toward basic residues; that stretch reads PKARRGKARRRAA. The tract at residues 248-275 is disordered; that stretch reads PKARRGKARRRAAKLQSSQEPEAPPPRD. A phosphoserine mark is found at serine 264 and serine 265. The region spanning 279–478 is the MAGE domain; the sequence is LQGRANDLVK…KEWAAQYREA (200 aa). A disordered region spans residues 534 to 563; the sequence is GAEAKAKAQESGSASTGASTSTNNSASASA.

Interacts with GNAS.

Functionally, regulates the expression, localization to the plasma membrane and function of the sodium chloride cotransporters SLC12A1 and SLC12A3, two key components of salt reabsorption in the distal renal tubule. The polypeptide is Melanoma-associated antigen D2 (MAGED2) (Pongo abelii (Sumatran orangutan)).